Consider the following 569-residue polypeptide: MMRFTKFYAPSLKEAPKDASLPSHIFLTRAGFVEQIGSGLYNFLPLGKRVLDKIKNIVKEEMDKAGAQEVNLSFITPASLWQESGRYNVFGKELLRFKDRKENEFVLGPTHEEAMLSLVKNKITSYKQLPLHLYQIGLKFRDEARPRFGLLRCREFLMKDGYSFHANEEDLGREFELMYKTYSQILQRMGLDFRAVEADSGAIGGSGSKEFMVLAKNGEDDILICENCDYAANIEAAKRAKKTCQDERPEANYASKFHTPNIKTIDSLAQFFKTNAFYTIKAVVKKAIYENESKLVVFFIRGSDDLQEVKAQNACSALELVDASEEELEKAGLVAGFIGFVGLKDIDFYIDFELENEKQMIMGANEKDYHLIGIDVVNLNKDRFKDLIEVKEGDCCVKCGAKLKQSKGIEVGHIFKLGQKYSKAMNANFLDENGKSQPFYMGCYGIGVSRLLAVAIEASHDEKGCIWNKTLAPFVLEIIVSNIKDEKTLEFANKLYEDLTELGLEVLLDDRNERFGVKMNDFELMGFPYALVIGKGLENNEIEFIQREGLVKELIKTDELTEILKKKVL.

The protein belongs to the class-II aminoacyl-tRNA synthetase family. ProS type 1 subfamily. As to quaternary structure, homodimer.

The protein resides in the cytoplasm. The enzyme catalyses tRNA(Pro) + L-proline + ATP = L-prolyl-tRNA(Pro) + AMP + diphosphate. Its function is as follows. Catalyzes the attachment of proline to tRNA(Pro) in a two-step reaction: proline is first activated by ATP to form Pro-AMP and then transferred to the acceptor end of tRNA(Pro). As ProRS can inadvertently accommodate and process non-cognate amino acids such as alanine and cysteine, to avoid such errors it has two additional distinct editing activities against alanine. One activity is designated as 'pretransfer' editing and involves the tRNA(Pro)-independent hydrolysis of activated Ala-AMP. The other activity is designated 'posttransfer' editing and involves deacylation of mischarged Ala-tRNA(Pro). The misacylated Cys-tRNA(Pro) is not edited by ProRS. The sequence is that of Proline--tRNA ligase from Campylobacter jejuni subsp. doylei (strain ATCC BAA-1458 / RM4099 / 269.97).